The chain runs to 85 residues: ATP synthase subunit c (85 aa).

Transmembrane regions (helical) follow at residues 19-39 and 62-82; these read LGAA…IGKI and IIAA…CLLV.

It belongs to the ATPase C chain family. As to quaternary structure, F-type ATPases have 2 components, F(1) - the catalytic core - and F(0) - the membrane proton channel. F(1) has five subunits: alpha(3), beta(3), gamma(1), delta(1), epsilon(1). F(0) has three main subunits: a(1), b(2) and c(10-14). The alpha and beta chains form an alternating ring which encloses part of the gamma chain. F(1) is attached to F(0) by a central stalk formed by the gamma and epsilon chains, while a peripheral stalk is formed by the delta and b chains.

It is found in the cell inner membrane. Functionally, f(1)F(0) ATP synthase produces ATP from ADP in the presence of a proton or sodium gradient. F-type ATPases consist of two structural domains, F(1) containing the extramembraneous catalytic core and F(0) containing the membrane proton channel, linked together by a central stalk and a peripheral stalk. During catalysis, ATP synthesis in the catalytic domain of F(1) is coupled via a rotary mechanism of the central stalk subunits to proton translocation. Its function is as follows. Key component of the F(0) channel; it plays a direct role in translocation across the membrane. A homomeric c-ring of between 10-14 subunits forms the central stalk rotor element with the F(1) delta and epsilon subunits. The sequence is that of ATP synthase subunit c from Bacteroides fragilis (strain ATCC 25285 / DSM 2151 / CCUG 4856 / JCM 11019 / LMG 10263 / NCTC 9343 / Onslow / VPI 2553 / EN-2).